Here is a 419-residue protein sequence, read N- to C-terminus: Multifunctional CCA protein (419 aa).

Residues Gly8 and Arg11 each contribute to the ATP site. Positions 8 and 11 each coordinate CTP. Positions 21 and 23 each coordinate Mg(2+). Residues Arg91, Arg137, and Arg140 each coordinate ATP. Arg91, Arg137, and Arg140 together coordinate CTP. The region spanning 226-327 (TGVHLMMVLD…VRLFDRCDAW (102 aa)) is the HD domain.

Belongs to the tRNA nucleotidyltransferase/poly(A) polymerase family. Bacterial CCA-adding enzyme type 1 subfamily. In terms of assembly, monomer. Can also form homodimers and oligomers. Mg(2+) is required as a cofactor. The cofactor is Ni(2+).

The catalysed reaction is a tRNA precursor + 2 CTP + ATP = a tRNA with a 3' CCA end + 3 diphosphate. The enzyme catalyses a tRNA with a 3' CCA end + 2 CTP + ATP = a tRNA with a 3' CCACCA end + 3 diphosphate. Functionally, catalyzes the addition and repair of the essential 3'-terminal CCA sequence in tRNAs without using a nucleic acid template. Adds these three nucleotides in the order of C, C, and A to the tRNA nucleotide-73, using CTP and ATP as substrates and producing inorganic pyrophosphate. tRNA 3'-terminal CCA addition is required both for tRNA processing and repair. Also involved in tRNA surveillance by mediating tandem CCA addition to generate a CCACCA at the 3' terminus of unstable tRNAs. While stable tRNAs receive only 3'-terminal CCA, unstable tRNAs are marked with CCACCA and rapidly degraded. The sequence is that of Multifunctional CCA protein from Leptothrix cholodnii (strain ATCC 51168 / LMG 8142 / SP-6) (Leptothrix discophora (strain SP-6)).